Reading from the N-terminus, the 324-residue chain is Probable acrylyl-CoA reductase AcuI (324 aa).

NADP(+) contacts are provided by residues tyrosine 41, 156 to 159, 178 to 180, arginine 198, leucine 242, isoleucine 256, serine 267, and asparagine 313; these read SGGV and SGR.

The protein belongs to the zinc-containing alcohol dehydrogenase family. Acrylyl-CoA reductase subfamily. In terms of assembly, homodimer.

Its subcellular location is the cytoplasm. It carries out the reaction propanoyl-CoA + NADP(+) = acryloyl-CoA + NADPH + H(+). In terms of biological role, probably catalyzes the NADPH-dependent reduction of acrylyl-CoA to propanoyl-CoA. The polypeptide is Probable acrylyl-CoA reductase AcuI (acuI) (Escherichia coli (strain K12)).